Consider the following 1374-residue polypeptide: MSWKERLDNPTLSVWPHDYLRPHAEPFVEQGTYSISIPQLSGDYATLLAAWTALLYRVTGDDDIVLYVRDNKVLRFTITPELTFTQLQNKINEQLAELANVEGTNFDALSESLQKESGLERPPQLFRIACVTEDLQLDRYTHSPLDIGLQLHESSSDVSIVFNKLLFSQDRITILADQLTLFLTSVLQNAKQVFTKVSLITDSSTSILPDPKANLDWCGFVGCIHDIFQDNAEKFPERTCVVETPPINSTKTRTFTYKDINEASNIVAHYLINTGIKRGDVVMIYSSRGVDLMVCVMGVLKAGATFSVIDPAYPPARQTIYLGVAKPKGLIVIRAAGQLDQLVEDYITKELDLVSRIPSIAIQDNGTVEGGSLPSESGDVLASYTELKSTRTGVVVGPDSNPTLSFTSGSEGIPKGVLGRHFSLAYYFSWMAKQFNLSENDKFTMLSGIAHDPIQRDMFTPLFLGAQLYVPTQDDIGTPGRLAEWMGKYGCTVTHLTPAMGQLLTAQAVTPFPKLHHAFFVGDILTKRDCLRLQTLAENCCIVNMYGTTETQRAVSYFEVTSRSQDPHFLKKLKDVMPAGRGMKNVQLLVVNRNDRTQVCGVGEIGEIYVRAGGLAEGYRGLPDLNKEKFVNNWFVEEGHWNYLDKDLEAPWKEFWQGPRDRLYRTGDLGRYLPNGDCECCGRADDQVKIRGFRIELGEIDTNISQHPLVRENITLVRNNLEGEKCLVTYMVPRFDKPELENFKIEVPSNISDDPVVCGLIGYSPFTKDLKAFLKKRLASYAIPSLIIVLPKLPLNPNGKVDKPKLQFPTVKQLELVAKNSSIDINDSEFNQQEREIRDLWLECLPTKPTSISPEDSFFDLGGHSILATKMIFTVKKQLNVELPLGTIFKYPTIKAFAAEVSRLKSTDKIEEETTALTADYASDAASLIDTLPKSYPAARALGSPSEMAGPTTVNIFVTGVTGFLGSFILSDILNRTVTGVNFKIFAHVRAADETSGLDRIRKAGTVYGTWKEEYANSLQVVIGDLSKKNFGLTDDKWSHLSETIDIIIHNGALVHWVYPYSKLRNANVVSTINIMNLASEGKPKLFNFVSSTSVLDTNHYFELSDKLQQSGKEGIPESDDLMGSSLGLTSGYGQSKWAAEHIIRAAGKRGLRGSIIRPGYVTGASYNGSSNTDDFLLRFLKSAVQLGKIPDINNTVNMVPVDQVARVVVAASINPPCGDDLCVVHVNAHPRIIFKDYLYELKNYGYDVEIENYEQWKKTLEEAVIERSEDNALFPLLHMVLGDLEDSTKAPELDDKNAITSLRADIEWTNEDRTKGMGATPEQIGIYISFLESVGFLPHPKHFGDKALPNIKISEQQKELVASGAGARSSSAA.

Positions 828–905 (SEFNQQEREI…AFAAEVSRLK (78 aa)) constitute a Carrier domain. Ser865 carries the O-(pantetheine 4'-phosphoryl)serine modification.

This sequence belongs to the ATP-dependent AMP-binding enzyme family. As to quaternary structure, heterodimer of an alpha and a beta subunit. The cofactor is pantetheine 4'-phosphate.

It carries out the reaction (S)-2-amino-6-oxohexanoate + NADP(+) + H2O = L-2-aminoadipate + NADPH + 2 H(+). It catalyses the reaction (S)-2-amino-6-oxohexanoate + NAD(+) + H2O = L-2-aminoadipate + NADH + 2 H(+). The enzyme catalyses (S)-2-amino-6-oxohexanoate + AMP + diphosphate + NADP(+) = L-2-aminoadipate + ATP + NADPH + H(+). The protein operates within amino-acid biosynthesis; L-lysine biosynthesis via AAA pathway; L-lysine from L-alpha-aminoadipate (fungal route): step 1/3. In terms of biological role, catalyzes the activation of alpha-aminoadipate by ATP-dependent adenylation and the reduction of activated alpha-aminoadipate by NADPH. The activated alpha-aminoadipate is bound to the phosphopantheinyl group of the enzyme itself before it is reduced to (S)-2-amino-6-oxohexanoate. This chain is L-2-aminoadipate reductase large subunit (LYS2), found in Candida glabrata (strain ATCC 2001 / BCRC 20586 / JCM 3761 / NBRC 0622 / NRRL Y-65 / CBS 138) (Yeast).